Reading from the N-terminus, the 157-residue chain is SsrA-binding protein (157 aa).

The protein belongs to the SmpB family.

Its subcellular location is the cytoplasm. Its function is as follows. Required for rescue of stalled ribosomes mediated by trans-translation. Binds to transfer-messenger RNA (tmRNA), required for stable association of tmRNA with ribosomes. tmRNA and SmpB together mimic tRNA shape, replacing the anticodon stem-loop with SmpB. tmRNA is encoded by the ssrA gene; the 2 termini fold to resemble tRNA(Ala) and it encodes a 'tag peptide', a short internal open reading frame. During trans-translation Ala-aminoacylated tmRNA acts like a tRNA, entering the A-site of stalled ribosomes, displacing the stalled mRNA. The ribosome then switches to translate the ORF on the tmRNA; the nascent peptide is terminated with the 'tag peptide' encoded by the tmRNA and targeted for degradation. The ribosome is freed to recommence translation, which seems to be the essential function of trans-translation. The polypeptide is SsrA-binding protein (Limosilactobacillus fermentum (strain NBRC 3956 / LMG 18251) (Lactobacillus fermentum)).